Consider the following 189-residue polypeptide: Protein Rex (189 aa).

The span at 1–16 shows a compositional bias: basic residues; that stretch reads MPKTRRGPRRSQRKRP. The interval 1–26 is disordered; sequence MPKTRRGPRRSQRKRPPTPWPTSQGL. Positions 2–18 match the Nuclear localization signal, and RNA-binding (RxRE) motif; sequence PKTRRGPRRSQRKRPPT. A homomultimerization region spans residues 56-70; the sequence is RPAYIVTPYWPPVQS. Residue serine 70 is modified to Phosphoserine; by host. Positions 82–93 match the Nuclear export signal motif; it reads LSAQLYSSLSLG. The segment at 87–189 is disordered; the sequence is YSSLSLGSPP…PPSPGPSCPR (103 aa). Over residues 115 to 125 the composition is skewed to pro residues; sequence IQPPTFHPPSS. The segment at 123–131 is homomultimerization; the sequence is PSSRPYANT. Residue threonine 174 is modified to Phosphothreonine; by host. Serine 177 carries the phosphoserine; by host modification. Pro residues predominate over residues 178–189; it reads FPPPSPGPSCPR.

This sequence belongs to the deltaretrovirus Rex protein family. Homomultimer. Multimeric assembly is essential for activity and involves XPO1. Binds to human XPO1 and KPNB1. Interacts (via N-terminal nuclear localization signal) with human NPM1. Phosphorylated.

The protein resides in the host nucleus. The protein localises to the host nucleolus. It is found in the host cytoplasm. In terms of biological role, rex escorts unspliced gag-pro-pol and singly spliced env mRNAs out of the nucleus of infected cells. These mRNAs carry a recognition sequence called Rex responsive element (RxRE or XRE) located at the 3' region of the long terminal repeat (LTR). This function is essential since most HTLV proteins are translated from unspliced or partially spliced pre-mRNAs that cannot exit the nucleus by the pathway used by fully processed cellular mRNAs. Rex itself is translated from a fully spliced mRNA that probably readily exits the nucleus. Rex's nuclear localization signal (NLS) binds directly to KPNB1/importin beta-1 without previous binding to KPNA1/importin alpha-1. KPNB1 binds to the GDP bound form of RAN (Ran-GDP) and targets Rex to the nucleus. In the nucleus, the conversion from Ran-GDP to Ran-GTP dissociates Rex from KPNB1 and allows Rex's binding to the RRE in viral pre-mRNAs. Rex multimerizes on the RRE via cooperative assembly. This multimerization is critical for its full biological activity, since it may shield the viral RNA from being spliced or down-regulated, and probably exposes Rex's nuclear export signal (NES) to the surface. Rex can then form a complex with XPO1/CRM1, RANBP3 and Ran-GTP, leading to nuclear export of the complex. Conversion from Ran-GTP to Ran-GDP mediates dissociation of the Rex/RRE/XPO1/RANBP3/RAN complex, so that Rex can return to the nucleus for a subsequent round of export. The chain is Protein Rex from Homo sapiens (Human).